The following is a 205-amino-acid chain: Probable 3'-5' exonuclease KapD (205 aa).

In terms of domain architecture, Exonuclease spans 6 to 173 (LLIIDFEFTM…DDALTAYKLF (168 aa)). 3 residues coordinate Mg(2+): Asp-10, Glu-12, and Asp-104. Glu-12 serves as the catalytic Proton acceptor. Residue Glu-12 participates in AMP binding. His-160 (proton acceptor) is an active-site residue. His-160 contacts AMP. Asp-165 provides a ligand contact to Mg(2+).

Requires Mg(2+) as cofactor.

Its function is as follows. Specifically inhibits the KinA pathway to sporulation. The polypeptide is Probable 3'-5' exonuclease KapD (kapD) (Bacillus subtilis (strain 168)).